Reading from the N-terminus, the 387-residue chain is Patatin-03 (387 aa).

The signal sequence occupies residues 1–23 (MATTKSVLVLIFMILATTSSTFA). A PNPLA domain is found at 32-230 (LSIDGGGIKG…TVADPALLSV (199 aa)). A GXGXXG motif is present at residues 36-41 (GGGIKG). The GXSXG motif lies at 75 to 79 (GTSTG). The active-site Nucleophile is Ser77. Asn115 and Asn203 each carry an N-linked (GlcNAc...) asparagine glycan. The active-site Proton acceptor is Asp216. The short motif at 216-218 (DGA) is the DGA/G element.

This sequence belongs to the patatin family. In terms of tissue distribution, tuber.

Its subcellular location is the vacuole. In terms of biological role, probable lipolytic acyl hydrolase (LAH), an activity which is thought to be involved in the response of tubers to pathogens. The chain is Patatin-03 from Solanum tuberosum (Potato).